Consider the following 287-residue polypeptide: MRSLHDVPAPAKLNLFLHITGRRADGYHLLQSVFMLLDWHDTLHFDRRGDGQISREDLSGMALPADDLIVRAARALQQATGCRAGVHIGVEKRLPAQAGMGGGSSDAASTLIALNRLWQLNLTRRELQRIALDLGADVPFFLCGNSAWVEGIGEHITPLEQAHALPPQRFVVVKPEAGLETLSIFRDATLKRDHAHATIEDFAADHYGFGQNDLQPVAERLQPEVKKAIDWLNSLKLHARMTGSGSAVFAPLTQTIDLKDAPGAWNVRVCSNLQAHPLKDWLKDESL.

The active site involves Lys12. Position 95–105 (Pro95–Ser105) interacts with ATP. Asp137 is an active-site residue.

The protein belongs to the GHMP kinase family. IspE subfamily.

It carries out the reaction 4-CDP-2-C-methyl-D-erythritol + ATP = 4-CDP-2-C-methyl-D-erythritol 2-phosphate + ADP + H(+). It participates in isoprenoid biosynthesis; isopentenyl diphosphate biosynthesis via DXP pathway; isopentenyl diphosphate from 1-deoxy-D-xylulose 5-phosphate: step 3/6. Catalyzes the phosphorylation of the position 2 hydroxy group of 4-diphosphocytidyl-2C-methyl-D-erythritol. This Delftia acidovorans (strain DSM 14801 / SPH-1) protein is 4-diphosphocytidyl-2-C-methyl-D-erythritol kinase.